A 203-amino-acid chain; its full sequence is Large ribosomal subunit protein bL25 (203 aa).

It belongs to the bacterial ribosomal protein bL25 family. CTC subfamily. In terms of assembly, part of the 50S ribosomal subunit; part of the 5S rRNA/L5/L18/L25 subcomplex. Contacts the 5S rRNA. Binds to the 5S rRNA independently of L5 and L18.

This is one of the proteins that binds to the 5S RNA in the ribosome where it forms part of the central protuberance. The chain is Large ribosomal subunit protein bL25 from Pseudomonas syringae pv. tomato (strain ATCC BAA-871 / DC3000).